Consider the following 102-residue polypeptide: Large ribosomal subunit protein uL24 (102 aa).

This sequence belongs to the universal ribosomal protein uL24 family. As to quaternary structure, part of the 50S ribosomal subunit.

One of two assembly initiator proteins, it binds directly to the 5'-end of the 23S rRNA, where it nucleates assembly of the 50S subunit. Its function is as follows. One of the proteins that surrounds the polypeptide exit tunnel on the outside of the subunit. In Limosilactobacillus reuteri (strain DSM 20016) (Lactobacillus reuteri), this protein is Large ribosomal subunit protein uL24.